Here is a 297-residue protein sequence, read N- to C-terminus: UBX domain-containing protein 1 (297 aa).

Alanine 2 carries the N-acetylalanine modification. The 41-residue stretch at 2–42 folds into the UBA domain; it reads AELTALESLIEMGFPRGRAEKALALTGNQGIEAAMDWLMEH. Positions 38–212 are disordered; the sequence is WLMEHEDDPD…QEPPTKREYD (175 aa). A compositionally biased stretch (acidic residues) spans 42 to 52; it reads HEDDPDVDEPL. The tract at residues 43 to 297 is interaction with BRCA1; the sequence is EDDPDVDEPL…VLIVAKKCPS (255 aa). Composition is skewed to basic and acidic residues over residues 86–122 and 137–177; these read LTEE…EREK and KLQE…ERAQ. A coiled-coil region spans residues 86–172; it reads LTEEERQEQT…RVREKIERDK (87 aa). Serine 199 bears the Phosphoserine mark. At serine 200 the chain carries Phosphoserine; by MAPK12. Phosphothreonine is present on residues threonine 207 and threonine 229. Residues 209–291 enclose the UBX domain; it reads REYDQCRIQV…GLVPSAVLIV (83 aa). Serine 270 is subject to Phosphoserine.

In terms of assembly, component of a complex required to couple retrotranslocation, ubiquitination and deglycosylation composed of NGLY1, SAKS1, AMFR, VCP and RAD23B. Interacts with HOMER2. Interacts directly with VCP. Interacts with BRCA1 and BARD1; interaction takes place when BRCA1 is not autoubiquitinated bur is strongly enhanced in the presence of autoubiquitinated BRCA1.

The protein resides in the cytoplasm. Functionally, ubiquitin-binding protein that interacts with the BRCA1-BARD1 heterodimer, and regulates its activity. Specifically binds 'Lys-6'-linked polyubiquitin chains. Interaction with autoubiquitinated BRCA1, leads to inhibit the E3 ubiquitin-protein ligase activity of the BRCA1-BARD1 heterodimer. Component of a complex required to couple deglycosylation and proteasome-mediated degradation of misfolded proteins in the endoplasmic reticulum that are retrotranslocated in the cytosol. In Rattus norvegicus (Rat), this protein is UBX domain-containing protein 1 (Ubxn1).